We begin with the raw amino-acid sequence, 165 residues long: Peptide methionine sulfoxide reductase MsrA (165 aa).

The active site involves Cys-10.

The protein belongs to the MsrA Met sulfoxide reductase family.

It carries out the reaction L-methionyl-[protein] + [thioredoxin]-disulfide + H2O = L-methionyl-(S)-S-oxide-[protein] + [thioredoxin]-dithiol. The catalysed reaction is [thioredoxin]-disulfide + L-methionine + H2O = L-methionine (S)-S-oxide + [thioredoxin]-dithiol. Has an important function as a repair enzyme for proteins that have been inactivated by oxidation. Catalyzes the reversible oxidation-reduction of methionine sulfoxide in proteins to methionine. This Campylobacter jejuni (strain RM1221) protein is Peptide methionine sulfoxide reductase MsrA.